A 478-amino-acid polypeptide reads, in one-letter code: MARGPARTSLGPGSQQLPLLSLLLLLLLRDADGSHTAAARPPPPAAADGLAGDKNPQRSPGDVAAAQSPGAQDMVAVHMLRLYEKYSRRGARPGGGNTVRSFRARLEVVNQKAVYFFNLTSMQDSEMILTATFHFYSEPQWPPAREVPCKQRAKNASCRLLPPGPPARQHLLFRSLSQNTATQGLLRGAMALPPPPRGLWQAKDISLIVKAARRDGELLLSAQLDSGEKDTGVPRLGPHAPYILIYANDLAISEPNSVAVTLQRYDPFQAGDPEPGAAPNSSADPRVRRATQATGPLQNNELPGLDERPAQAPHAQHYHKHELWPNPLRALKPRPGRKDRRKKGQDVFMASSQVLDFDEKTMQKARKKQWDEPRVCSRRYLKVDFADIGWNEWIISPKSFDAYYCSGACEFPMPKMVRPSNHATIQSIVRAVGIVPGIPEPCCVPDKMSSLGVLFLDENRNVVLKVYPNMSVETCACR.

An N-terminal signal peptide occupies residues M1–G33. Residues S34–G70 are disordered. The propeptide occupies S34–K368. N118, N155, and N280 each carry an N-linked (GlcNAc...) asparagine glycan. The segment at P267–Q345 is disordered. Residues T291 to E301 show a composition bias toward polar residues. Residues L331 to K343 are compositionally biased toward basic residues. 3 disulfide bridges follow: C376/C443, C405/C475, and C409/C477. An N-linked (GlcNAc...) asparagine glycan is attached at N469.

This sequence belongs to the TGF-beta family. As to quaternary structure, homodimer or heterodimer. Can form a non-covalent complex of the mature region and the pro-region.

Its subcellular location is the secreted. Growth factor involved in osteogenesis and adipogenesis. Plays an inhibitory role in the process of osteoblast differentiation via SMAD2/3 pathway. Plays an inhibitory role in the process of adipogenesis. In Bos taurus (Bovine), this protein is Growth/differentiation factor 10 (GDF10).